The following is an 859-amino-acid chain: Chitin synthase 1 (859 aa).

The segment at 1–22 (MRRWFKKTLPRPPDEEESAGLT) is disordered. A run of 5 helical transmembrane segments spans residues 544-564 (LATI…FYIL), 615-635 (MVIM…WIAY), 662-682 (FINI…VSII), 793-813 (YVVL…LSIP), and 833-853 (LWSV…YLFI).

Belongs to the chitin synthase family.

Its subcellular location is the cell membrane. It catalyses the reaction [(1-&gt;4)-N-acetyl-beta-D-glucosaminyl](n) + UDP-N-acetyl-alpha-D-glucosamine = [(1-&gt;4)-N-acetyl-beta-D-glucosaminyl](n+1) + UDP + H(+). Functionally, polymerizes chitin, a structural polymer of the cell wall and septum, by transferring the sugar moiety of UDP-GlcNAc to the non-reducing end of the growing chitin polymer. The sequence is that of Chitin synthase 1 (chs1) from Schizosaccharomyces pombe (strain 972 / ATCC 24843) (Fission yeast).